We begin with the raw amino-acid sequence, 224 residues long: Ras-related protein Rab-32C (224 aa).

The disordered stretch occupies residues 1 to 22 (MYSNKNDKDKDKDQNNENNKNN). Position 35 to 42 (35 to 42 (GKLACGKT)) interacts with GTP. The short motif at 57 to 65 (YKPTIGVDF) is the Effector region element. Residues 83 to 87 (DIAGQ) and 142 to 145 (NKCD) each bind GTP. Positions 203–224 (GFKLSDQSQSTETTPTQSKTCC) are disordered. Residues 209 to 224 (QSQSTETTPTQSKTCC) are compositionally biased toward low complexity. Residues cysteine 223 and cysteine 224 are each lipidated (S-geranylgeranyl cysteine).

This sequence belongs to the small GTPase superfamily. Rab family.

The chain is Ras-related protein Rab-32C (rab32C) from Dictyostelium discoideum (Social amoeba).